A 176-amino-acid polypeptide reads, in one-letter code: Protein tyrosine phosphatase PRL-1 (176 aa).

The 153-residue stretch at 13-165 folds into the Tyrosine-protein phosphatase domain; the sequence is GESDAVVFRF…YKPRHQEGNE (153 aa). A disulfide bond links cysteine 52 and cysteine 107. Aspartate 75 (proton donor) is an active-site residue. Cysteine 107 acts as the Phosphocysteine intermediate in catalysis. Residue 109–113 participates in substrate binding; sequence AGLGR. The residue at position 173 (cysteine 173) is a Cysteine methyl ester. Residue cysteine 173 is the site of S-farnesyl cysteine attachment. The propeptide at 174-176 is removed in mature form; it reads AVM.

It belongs to the protein-tyrosine phosphatase family.

The protein localises to the flagellar pocket. The catalysed reaction is O-phospho-L-tyrosyl-[protein] + H2O = L-tyrosyl-[protein] + phosphate. Activated in a reduced environment which promotes the reduction of the disulfide bond between the regulatory Cys-52 and the catalytic Cys-107 residues. Inhibited by sodium orthovanadate. Its function is as follows. Has protein tyrosine phosphatase activity. The protein is Protein tyrosine phosphatase PRL-1 of Trypanosoma cruzi (strain CL Brener).